The following is a 126-amino-acid chain: MAKDYPRSRRIAEQLRRELAEVIRDDVDDPRVGSVTISEVQVSRDLAHATVYVTVLGAEAAEAQAGIDILNKAHGFLRSQVARRIRAKRTPSLRFLHDTAFDRGARLSALIDEVAPPPADDEPSKE.

It belongs to the RbfA family. Monomer. Binds 30S ribosomal subunits, but not 50S ribosomal subunits or 70S ribosomes.

Its subcellular location is the cytoplasm. In terms of biological role, one of several proteins that assist in the late maturation steps of the functional core of the 30S ribosomal subunit. Associates with free 30S ribosomal subunits (but not with 30S subunits that are part of 70S ribosomes or polysomes). Required for efficient processing of 16S rRNA. May interact with the 5'-terminal helix region of 16S rRNA. The polypeptide is Ribosome-binding factor A (Halorhodospira halophila (strain DSM 244 / SL1) (Ectothiorhodospira halophila (strain DSM 244 / SL1))).